Consider the following 490-residue polypeptide: Cis-aconitate decarboxylase (490 aa).

This sequence belongs to the PrpD family.

The protein resides in the mitochondrion. It carries out the reaction cis-aconitate + H(+) = itaconate + CO2. Involved in the production of itaconic acid, a soluble unsaturated dicarboxylic acid mainly produced from sugars. This chain is Cis-aconitate decarboxylase (cad1), found in Aspergillus terreus.